A 217-amino-acid chain; its full sequence is Germin-like protein subfamily 1 member 1 (217 aa).

Positions 1-18 are cleaved as a signal peptide; the sequence is MILNILLTLTLLMGRVKS. Cys27 and Cys45 form a disulfide bridge. In terms of domain architecture, Cupin type-1 spans 59–209; the sequence is SALSRPGNTK…AYDINGQDVA (151 aa). An N-linked (GlcNAc...) asparagine glycan is attached at Asn75. 4 residues coordinate Mn(2+): His108, His110, Glu115, and His154.

This sequence belongs to the germin family. As to quaternary structure, oligomer (believed to be a pentamer but probably hexamer).

It is found in the secreted. The protein localises to the extracellular space. The protein resides in the apoplast. Its function is as follows. May play a role in plant defense. Probably has no oxalate oxidase activity even if the active site is conserved. The polypeptide is Germin-like protein subfamily 1 member 1 (GLP7) (Arabidopsis thaliana (Mouse-ear cress)).